Consider the following 545-residue polypeptide: Carboxypeptidase N subunit 2 (545 aa).

Residues 1-21 (MLPGAWLLWTSLLLLARPAQP) form the signal peptide. Residues 22–49 (CPMGCDCFVQEVFCSDEELATVPLDIPP) enclose the LRRNT domain. N74, N111, and N119 each carry an N-linked (GlcNAc...) asparagine glycan. LRR repeat units follow at residues 98–119 (RLED…IFSN), 122–143 (SLGK…LFQH), 146–167 (ALES…LFQP), 170–191 (HLKT…LFHP), 194–215 (SLQT…VFGK), 218–239 (SLQE…VFSQ), 242–263 (CLER…IFAS), 266–287 (NLTF…LFAH), 290–311 (CLVG…TFAH), 314–335 (NLRS…IFRD), 338–359 (ELVK…LFQN), and 362–383 (KLEL…IFDT). N228 is a glycosylation site (N-linked (GlcNAc...) asparagine). N266 is a glycosylation site (N-linked (GlcNAc...) asparagine). N-linked (GlcNAc...) asparagine glycans are attached at residues N348 and N359. Residues 395–447 (NPWQCDCHLAYLFNWLQQYTDRLLNIQTYCAGPAYLKGQVVPALNEKQLVCPV) form the LRRCT domain. Residue N518 is glycosylated (N-linked (GlcNAc...) asparagine).

As to quaternary structure, tetramer of two catalytic chains and two glycosylated inactive chains. Whether or not any Cys residues participate in intrachain bonds is unknown, but they do not form interchain disulfide bonds with the 50 kDa catalytic subunit.

The protein resides in the secreted. Its function is as follows. The 83 kDa subunit binds and stabilizes the catalytic subunit at 37 degrees Celsius and keeps it in circulation. Under some circumstances it may be an allosteric modifier of the catalytic subunit. The sequence is that of Carboxypeptidase N subunit 2 (CPN2) from Homo sapiens (Human).